The chain runs to 363 residues: NADH-quinone oxidoreductase subunit H (363 aa).

Helical transmembrane passes span 29–49 (VLKI…YVVW), 62–82 (GPMY…KLLF), 96–116 (FVIA…VVPF), 127–147 (VGLL…ILAG), 163–183 (AAQV…VMIA), 202–222 (FFDW…VSGV), 238–257 (EIVA…LFFL), 264–286 (ILVS…QGWV), 299–319 (KGGW…YIWF), and 339–359 (FIPL…YGVI).

It belongs to the complex I subunit 1 family. NDH-1 is composed of 14 different subunits. Subunits NuoA, H, J, K, L, M, N constitute the membrane sector of the complex.

It localises to the cell inner membrane. The enzyme catalyses a quinone + NADH + 5 H(+)(in) = a quinol + NAD(+) + 4 H(+)(out). NDH-1 shuttles electrons from NADH, via FMN and iron-sulfur (Fe-S) centers, to quinones in the respiratory chain. The immediate electron acceptor for the enzyme in this species is believed to be ubiquinone. Couples the redox reaction to proton translocation (for every two electrons transferred, four hydrogen ions are translocated across the cytoplasmic membrane), and thus conserves the redox energy in a proton gradient. This subunit may bind ubiquinone. This Xanthomonas euvesicatoria pv. vesicatoria (strain 85-10) (Xanthomonas campestris pv. vesicatoria) protein is NADH-quinone oxidoreductase subunit H.